The sequence spans 331 residues: Type 2 lactosamine alpha-2,3-sialyltransferase (331 aa).

Residues 1–4 lie on the Cytoplasmic side of the membrane; it reads MRGY. A helical; Signal-anchor for type II membrane protein membrane pass occupies residues 5-25; it reads LVAIFLSAVFLYYVLHCILWG. Over 26-331 the chain is Lumenal; it reads TNVYWVAPVE…KNLVINLTQD (306 aa). 6 N-linked (GlcNAc...) asparagine glycosylation sites follow: asparagine 129, asparagine 181, asparagine 282, asparagine 295, asparagine 308, and asparagine 327.

This sequence belongs to the glycosyltransferase 29 family.

Its subcellular location is the golgi apparatus membrane. It carries out the reaction a neolactoside nLc4Cer(d18:1(4E)) + CMP-N-acetyl-beta-neuraminate = a neolactoside IV(3)-alpha-NeuAc-nLc4Cer(d18:1(4E)) + CMP + H(+). The catalysed reaction is a beta-D-galactosyl-(1-&gt;4)-N-acetyl-beta-D-glucosaminyl derivative + CMP-N-acetyl-beta-neuraminate = an N-acetyl-alpha-neuraminyl-(2-&gt;3)-beta-D-galactosyl-(1-&gt;4)-N-acetyl-beta-D-glucosaminyl derivative + CMP + H(+). It catalyses the reaction a neolactoside nLc6Cer(d18:1(4E)) + CMP-N-acetyl-beta-neuraminate = a neolactoside VI(3)-alpha-NeuNAc-nLc6Cer(d18:1(4E)) + CMP + H(+). Transfers the sialyl residue from CMP-N-acetyl-beta-neuraminate to the terminal galactose residue on sugar chains of glycoproteins and glycolipids. It's alpha-2,3-sialyltransferase activity is specific toward type II glycan chains (Galbeta1-4GlcNAc) on glycoproteins and glycolipids such as neolactosides nLc4Cer and nLc6Cer, whose sialyl-products serve as precursors for the Lewis X antigen. Critically involved in the synthesis of functional selectin ligands needed for neutrophil recruitment during inflammation and lymphocyte homing to the lymph nodes. This chain is Type 2 lactosamine alpha-2,3-sialyltransferase (ST3GAL6), found in Pan troglodytes (Chimpanzee).